Consider the following 368-residue polypeptide: MGNILRCFKGDDDGGDHYPYYKPTSRPHYQPPHYHGQPAAPPAPLQQQHLGPHGVTPSTVGVAALAHDLLNFESTSMVPDGLSQHVVSSRKAQVKWYQKLLEAYKNTTPPPKTPANAAQLIARALNMIQRADLEGILEFYNLPIPSLPTASSNYQPSLLPEGVQFVLNTLPVYDKCIGDGDGFTAYVPTTDPRESANVPLEVHELVIARTQARKCRDYQSADALLSSLDEAGYKIISCSDDEVLARKYRIRMRGIDAPELKMPYGKESRTALVKLIGGKSVKIYVYDLDQFGRYVGDIYCNNLFIQEQMLKNGHAWHFKTYDKRPEFARWEREARAANRGLWASGNPEKPWDWRRDQRNARQDAIQVY.

Residue Gly2 is the site of N-myristoyl glycine attachment. Cys7 carries the S-palmitoyl cysteine lipid modification. The interval 16–56 (DHYPYYKPTSRPHYQPPHYHGQPAAPPAPLQQQHLGPHGVT) is disordered. Residues 27-38 (PHYQPPHYHGQP) show a composition bias toward low complexity. The 177-residue stretch at 168–344 (NTLPVYDKCI…RAANRGLWAS (177 aa)) folds into the TNase-like domain. Asp181 contributes to the Ca(2+) binding site. The active site involves Arg251. Asp256 contacts Ca(2+). Catalysis depends on residues Glu259 and Arg293.

This sequence belongs to the thermonuclease family. The cofactor is Ca(2+).

It localises to the cell membrane. In terms of biological role, enzyme that catalyzes the hydrolysis of both DNA and RNA at the 5' position of the phosphodiester bond. In Oryza sativa subsp. japonica (Rice), this protein is Probable staphylococcal-like nuclease CAN2.